The sequence spans 476 residues: Ubiquitin-conjugating enzyme E2 variant 3 (476 aa).

The UEV domain maps to 2 to 145; the sequence is EFSAETLRQQ…EEELPLYSLS (144 aa). Residue 185–213 participates in NAD(+) binding; that stretch reads GDMALACLLAVSAKGTAGKLLLLDPTDGE.

The protein in the N-terminal section; belongs to the ubiquitin-conjugating enzyme family. UEV subfamily. In the C-terminal section; belongs to the LDH/MDH superfamily. As to quaternary structure, homodimer.

In terms of biological role, possible negative regulator of polyubiquitination. The chain is Ubiquitin-conjugating enzyme E2 variant 3 (uevld) from Xenopus tropicalis (Western clawed frog).